A 186-amino-acid chain; its full sequence is Elongation factor P (186 aa).

This sequence belongs to the elongation factor P family.

It is found in the cytoplasm. The protein operates within protein biosynthesis; polypeptide chain elongation. In terms of biological role, involved in peptide bond synthesis. Stimulates efficient translation and peptide-bond synthesis on native or reconstituted 70S ribosomes in vitro. Probably functions indirectly by altering the affinity of the ribosome for aminoacyl-tRNA, thus increasing their reactivity as acceptors for peptidyl transferase. This chain is Elongation factor P, found in Prochlorococcus marinus (strain MIT 9312).